A 709-amino-acid chain; its full sequence is Elongation factor G (709 aa).

One can recognise a tr-type G domain in the interval 9–296 (AKVRNIGIMA…AVVRYLPSPL (288 aa)). GTP contacts are provided by residues 18-25 (AHIDAGKT), 86-90 (DTPGH), and 140-143 (NKLD).

It belongs to the TRAFAC class translation factor GTPase superfamily. Classic translation factor GTPase family. EF-G/EF-2 subfamily.

The protein localises to the cytoplasm. In terms of biological role, catalyzes the GTP-dependent ribosomal translocation step during translation elongation. During this step, the ribosome changes from the pre-translocational (PRE) to the post-translocational (POST) state as the newly formed A-site-bound peptidyl-tRNA and P-site-bound deacylated tRNA move to the P and E sites, respectively. Catalyzes the coordinated movement of the two tRNA molecules, the mRNA and conformational changes in the ribosome. This is Elongation factor G from Streptomyces griseus subsp. griseus (strain JCM 4626 / CBS 651.72 / NBRC 13350 / KCC S-0626 / ISP 5235).